A 121-amino-acid polypeptide reads, in one-letter code: Large ribosomal subunit protein bL20 (121 aa).

Belongs to the bacterial ribosomal protein bL20 family.

Its function is as follows. Binds directly to 23S ribosomal RNA and is necessary for the in vitro assembly process of the 50S ribosomal subunit. It is not involved in the protein synthesizing functions of that subunit. The protein is Large ribosomal subunit protein bL20 of Beijerinckia indica subsp. indica (strain ATCC 9039 / DSM 1715 / NCIMB 8712).